A 1755-amino-acid polypeptide reads, in one-letter code: Transposon Ty1-GR3 Gag-Pol polyprotein (1755 aa).

Polar residues-rich tracts occupy residues 1 to 10 (MESQQLSNYP), 48 to 60 (TKAN…TPAS), and 127 to 152 (QSQF…GNTF). Disordered stretches follow at residues 1–93 (MESQ…MMTQ), 126–173 (PQSQ…RPPP), and 352–421 (GSRN…SKST). The span at 153–165 (TDSSSADSDMTST) shows a compositional bias: low complexity. Positions 299-401 (NNGIHINNKV…NSKSKTARAH (103 aa)) are RNA-binding. The segment covering 402 to 418 (NVSTSNNSPSTDNDSIS) has biased composition (low complexity). At Ser416 the chain carries Phosphoserine. Asp461 (for protease activity; shared with dimeric partner) is an active-site residue. An integrase-type zinc finger-like region spans residues 583 to 640 (NVHTSESTRKYPYPFIHRMLAHANAQTIRYSLKNNTITYFNESDVDWSSAIDYQCPDC). The region spanning 660–835 (NSYEPFQYLH…AGLDISTLLP (176 aa)) is the Integrase catalytic domain. The Mg(2+) site is built by Asp671 and Asp736. The segment at 956–1172 (SKAVSPTDST…LGGIGDSNAY (217 aa)) is disordered. A compositionally biased stretch (low complexity) spans 960 to 969 (SPTDSTPPST). 2 stretches are compositionally biased toward polar residues: residues 1005–1015 (STPQISNIEST) and 1031–1043 (MSQS…SYAS). Residues 1044-1053 (KSKDFRHSDS) are compositionally biased toward basic and acidic residues. Composition is skewed to polar residues over residues 1054-1082 (YSDN…QTSE) and 1095-1106 (SIDTSSSESNSL). A Bipartite nuclear localization signal motif is present at residues 1178-1212 (KKRSLEDNETEIKVSRDTWNTKNMRSLEPPRSKKR). One can recognise a Reverse transcriptase Ty1/copia-type domain in the interval 1338–1476 (NNYYITQLDI…DILGLEIKYQ (139 aa)). Residues Asp1346, Asp1427, Asp1428, Asp1610, Glu1652, and Asp1685 each contribute to the Mg(2+) site. The RNase H Ty1/copia-type domain maps to 1610–1752 (DASYGNQPYY…IKTFKLLTNK (143 aa)).

In terms of assembly, the capsid protein forms a homotrimer, from which the VLPs are assembled. The protease is a homodimer, whose active site consists of two apposed aspartic acid residues. Initially, virus-like particles (VLPs) are composed of the structural unprocessed proteins Gag and Gag-Pol, and also contain the host initiator methionine tRNA (tRNA(i)-Met) which serves as a primer for minus-strand DNA synthesis, and a dimer of genomic Ty RNA. Processing of the polyproteins occurs within the particle and proceeds by an ordered pathway, called maturation. First, the protease (PR) is released by autocatalytic cleavage of the Gag-Pol polyprotein yielding capsid protein p45 and a Pol-p154 precursor protein. This cleavage is a prerequisite for subsequent processing of Pol-p154 at the remaining sites to release the mature structural and catalytic proteins. Maturation takes place prior to the RT reaction and is required to produce transposition-competent VLPs.

It is found in the cytoplasm. The protein resides in the nucleus. The enzyme catalyses DNA(n) + a 2'-deoxyribonucleoside 5'-triphosphate = DNA(n+1) + diphosphate. It catalyses the reaction Endonucleolytic cleavage to 5'-phosphomonoester.. Its function is as follows. Capsid protein (CA) is the structural component of the virus-like particle (VLP), forming the shell that encapsulates the retrotransposons dimeric RNA genome. The particles are assembled from trimer-clustered units and there are holes in the capsid shells that allow for the diffusion of macromolecules. CA also has nucleocapsid-like chaperone activity, promoting primer tRNA(i)-Met annealing to the multipartite primer-binding site (PBS), dimerization of Ty1 RNA and initiation of reverse transcription. The aspartyl protease (PR) mediates the proteolytic cleavages of the Gag and Gag-Pol polyproteins after assembly of the VLP. Functionally, reverse transcriptase/ribonuclease H (RT) is a multifunctional enzyme that catalyzes the conversion of the retro-elements RNA genome into dsDNA within the VLP. The enzyme displays a DNA polymerase activity that can copy either DNA or RNA templates, and a ribonuclease H (RNase H) activity that cleaves the RNA strand of RNA-DNA heteroduplexes during plus-strand synthesis and hydrolyzes RNA primers. The conversion leads to a linear dsDNA copy of the retrotransposon that includes long terminal repeats (LTRs) at both ends. In terms of biological role, integrase (IN) targets the VLP to the nucleus, where a subparticle preintegration complex (PIC) containing at least integrase and the newly synthesized dsDNA copy of the retrotransposon must transit the nuclear membrane. Once in the nucleus, integrase performs the integration of the dsDNA into the host genome. The sequence is that of Transposon Ty1-GR3 Gag-Pol polyprotein (TY1B-GR3) from Saccharomyces cerevisiae (strain ATCC 204508 / S288c) (Baker's yeast).